Consider the following 328-residue polypeptide: Phospholipid scramblase 1 (328 aa).

The segment at 1–93 (MENHSKQTEA…NHPGGPGGTP (93 aa)) is proline-rich domain (PRD). The disordered stretch occupies residues 1-96 (MENHSKQTEA…GGPGGTPWMP (96 aa)). Residues 1 to 297 (MENHSKQTEA…IQFPLDLDVK (297 aa)) are Cytoplasmic-facing. The short motif at 18–26 (PAGYPPPYP) is the SH3-binding 1 element. Positions 22-25 (PPPY) match the PPxY motif motif. Over residues 28–47 (AAFQGPSDHAAYPIPQAGYQ) the composition is skewed to low complexity. The span at 49 to 64 (PPGPYPGPQPGYPVPP) shows a compositional bias: pro residues. The SH3-binding 2 motif lies at 56-64 (PQPGYPVPP). Tyrosine 83 bears the Phosphotyrosine; by ABL mark. Residues 93–101 (PWMPAPPPP) carry the SH3-binding 3 motif. Residue threonine 170 is modified to Phosphothreonine; by PKC/PRKCD. Residues cysteine 193, cysteine 194, cysteine 197, and cysteine 198 are each lipidated (S-palmitoyl cysteine). A Nuclear localization signal motif is present at residues 269 to 275 (SKQWSGF). Residues 298-314 (MKAVMLGACFLIDFMFF) traverse the membrane as a helical segment. The Extracellular segment spans residues 315–328 (ERTGNEEQRSGAWQ).

It belongs to the phospholipid scramblase family. In terms of assembly, forms homooligomers in the presence of calcium. Interacts with ABL. Interacts with RELT, RELL1 and RELL2. Interacts with OXSR1 in the presence of RELT. Interacts with OCLN, TOP2A and TOP2B. Interacts with TRPC1, TRPC4 and TRPC5. Interacts with ILDR1. It depends on Ca(2+) as a cofactor. Mg(2+) is required as a cofactor. Requires Zn(2+) as cofactor. Post-translationally, phosphorylation at Thr-170 by PKC/PKCD increases its phospholipid scramblase activity during both cell stimulation and apoptosis. Phosphorylated by OXSR1 in the presence of RELT. In terms of processing, palmitoylation is required for its phospholipid scramblase activity. Palmitoylation regulates its localization to the cell membrane or the nucleus; trafficking to the cell membrane is dependent upon palmitoylation whereas in the absence of palmitoylation, localizes to the nucleus. In terms of tissue distribution, highly expressed in kidney, lung, liver and bone marrow, slightly in spleen, heart and macrophage.

It localises to the cell membrane. The protein localises to the nucleus. It is found in the cytoplasm. Its subcellular location is the perinuclear region. The enzyme catalyses a 1,2-diacyl-sn-glycero-3-phosphocholine(in) = a 1,2-diacyl-sn-glycero-3-phosphocholine(out). The catalysed reaction is a 1,2-diacyl-sn-glycero-3-phosphoethanolamine(in) = a 1,2-diacyl-sn-glycero-3-phosphoethanolamine(out). It catalyses the reaction a 1,2-diacyl-sn-glycero-3-phospho-L-serine(in) = a 1,2-diacyl-sn-glycero-3-phospho-L-serine(out). Its function is as follows. Catalyzes calcium-induced ATP-independent rapid bidirectional and non-specific distribution of phospholipids (lipid scrambling or lipid flip-flop) between the inner and outer leaflet of the plasma membrane resulting in collapse of the phospholipid asymmetry which leads to phosphatidylserine externalization on the cell surface. Mediates calcium-dependent phosphatidylserine externalization and apoptosis in neurons via its association with TRPC5. Also exhibits magnesium-dependent nuclease activity against double-stranded DNA and RNA but not single-stranded DNA and can enhance DNA decatenation mediated by TOP2A. Negatively regulates FcR-mediated phagocytosis in differentiated macrophages. May contribute to cytokine-regulated cell proliferation and differentiation. The protein is Phospholipid scramblase 1 (Plscr1) of Mus musculus (Mouse).